The primary structure comprises 599 residues: Exocyst complex component EXO70B2 (599 aa).

Positions 38–58 (GASGNRGGDPRPTPSRGGSNV) are disordered.

The protein belongs to the EXO70 family. In terms of assembly, self interacts. Interacts with EXO70B1. Interacts with the exocyst subunits EXO70H1, SEC5A and SEC15B. Binds to SNAP33. Subunit of the exocyst complex that mediates vesicle tethering during exocytosis. Binds to PUB22. Post-translationally, target of the E3 ubiquitin-protein ligase PUB22 that mediates its ubiquitination and degradation via the 26S proteasome to attenuate pathogen-associated molecular patterns (PAMP)-induced signaling, especially is response to the bacterial elicitor flg22. Mostly expressed in leaves and, to a lower extent, in roots, cotyledons, internodes, flower buds, siliques and anthers.

Its subcellular location is the cytoplasmic vesicle. It localises to the phagosome. The protein resides in the cytoplasm. The protein localises to the nucleus. Its function is as follows. Component of an exocyst subcomplex specifically involved in autophagy-related, Golgi-independent membrane traffic to the vacuole. Regulates autophagosome formation and autophagy-related Golgi-independent import into the vacuole. Positive regulator of defense responses to pathogenic bacteria (e.g. P.syringae pv. maculicola), to the biotrophic oomycete H.arabidopsidis and to fungi (e.g. B.graminis hordei), especially in cell wall apposition formation related to plant defense. Required for both immediate and later responses triggered by pathogen-associated molecular patterns (PAMPs). Positive regulator of abscisic acid (ABA)-independent mannitol (drought)-promoted stomatal closure. This is Exocyst complex component EXO70B2 from Arabidopsis thaliana (Mouse-ear cress).